Reading from the N-terminus, the 396-residue chain is Acetate kinase (396 aa).

Asparagine 7 serves as a coordination point for Mg(2+). Residue lysine 14 participates in ATP binding. Substrate is bound at residue arginine 88. The Proton donor/acceptor role is filled by aspartate 145. Residues 205-209, 279-281, and 327-331 each bind ATP; these read HLGNG, DFR, and GIGEN. Glutamate 381 provides a ligand contact to Mg(2+).

Belongs to the acetokinase family. As to quaternary structure, homodimer. Mg(2+) serves as cofactor. The cofactor is Mn(2+).

The protein localises to the cytoplasm. The catalysed reaction is acetate + ATP = acetyl phosphate + ADP. It functions in the pathway metabolic intermediate biosynthesis; acetyl-CoA biosynthesis; acetyl-CoA from acetate: step 1/2. Its function is as follows. Catalyzes the formation of acetyl phosphate from acetate and ATP. Can also catalyze the reverse reaction. This chain is Acetate kinase, found in Campylobacter jejuni subsp. doylei (strain ATCC BAA-1458 / RM4099 / 269.97).